Here is a 35-residue protein sequence, read N- to C-terminus: Photosystem II reaction center protein T (35 aa).

A helical membrane pass occupies residues 3–23; the sequence is ALVYTFLLVSTLGIIFFAIFF.

Belongs to the PsbT family. PSII is composed of 1 copy each of membrane proteins PsbA, PsbB, PsbC, PsbD, PsbE, PsbF, PsbH, PsbI, PsbJ, PsbK, PsbL, PsbM, PsbT, PsbY, PsbZ, Psb30/Ycf12, at least 3 peripheral proteins of the oxygen-evolving complex and a large number of cofactors. It forms dimeric complexes.

The protein localises to the plastid. It is found in the chloroplast thylakoid membrane. Functionally, found at the monomer-monomer interface of the photosystem II (PS II) dimer, plays a role in assembly and dimerization of PSII. PSII is a light-driven water plastoquinone oxidoreductase, using light energy to abstract electrons from H(2)O, generating a proton gradient subsequently used for ATP formation. The polypeptide is Photosystem II reaction center protein T (Metasequoia glyptostroboides (Dawn redwood)).